The following is an 803-amino-acid chain: Early 94 kDa protein (803 aa).

This Lepidoptera (butterflies and moths) protein is Early 94 kDa protein.